We begin with the raw amino-acid sequence, 817 residues long: ABC transporter G family member STR (817 aa).

The tract at residues 1–30 is disordered; that stretch reads MARLERDGTNKSLESLMDSHKPGGTTTNLN. Residues 1 to 542 are Cytoplasmic-facing; sequence MARLERDGTN…RTVLNVIRTP (542 aa). The ABC transporter domain occupies 43–294; that stretch reads LEFTNLSYSI…LSGFGRPVPD (252 aa). Residue 87–94 coordinates ATP; sequence GPSGAGKS. Disordered stretches follow at residues 321–349, 362–395, and 439–463; these read QYQH…RRNT, GFTA…LERR, and RPPS…GPRS. The span at 362 to 375 shows a compositional bias: polar residues; it reads GFTAGTPQPDSSQF. The span at 377–388 shows a compositional bias: acidic residues; that stretch reads LDDDDNDDDENF. A helical membrane pass occupies residues 543–563; sequence ELFASREIVLTVMALVLSTIF. Over 564-579 the chain is Extracellular; it reads KNLGDTTFIDINRLLN. The chain crosses the membrane as a helical span at residues 580–600; sequence FYIFAVCLVFFSSNDAVPSFI. Residues 601–621 lie on the Cytoplasmic side of the membrane; sequence MERFIFIRETSHNAYRASSYV. A helical transmembrane segment spans residues 622 to 642; that stretch reads ISSLIVYLPFFAVQGLTFAVI. Topologically, residues 643 to 657 are extracellular; the sequence is TKLMLHLKSNLFNFW. The helical transmembrane segment at 658–678 threads the bilayer; it reads MILFASLITTNAYVMLVSALV. At 679-681 the chain is on the cytoplasmic side; that stretch reads PSY. The helical transmembrane segment at 682 to 702 threads the bilayer; it reads ITGYAVVIATTALFFLTCGFF. The Extracellular segment spans residues 703–787; sequence LKRTQIPAYW…TMDITMESLW (85 aa). N762 is a glycosylation site (N-linked (GlcNAc...) asparagine). A helical membrane pass occupies residues 788 to 808; it reads YDILILLAWGVLYRFFFYLVL. Topologically, residues 809–817 are cytoplasmic; the sequence is RFYSKNERK.

It belongs to the ABC transporter superfamily. ABCG family. Stunted arbuscule (STR) subfamily. As to quaternary structure, heterodimerizes with STR2; the resulting transporter is located in the peri-arbuscular membrane. In terms of tissue distribution, expressed constitutively in the vascular tissue of roots.

The protein localises to the cell membrane. Functionally, together with STR2, required for arbuscule development in arbuscular mycorrhizal (AM) symbiosis. The protein is ABC transporter G family member STR of Medicago truncatula (Barrel medic).